The primary structure comprises 351 residues: Translation initiation factor eIF2B subunit beta (351 aa).

Belongs to the eIF-2B alpha/beta/delta subunits family. Component of the translation initiation factor 2B (eIF2B) complex which is a heterodecamer of two sets of five different subunits: alpha, beta, gamma, delta and epsilon. Subunits alpha, beta and delta comprise a regulatory subcomplex and subunits epsilon and gamma comprise a catalytic subcomplex. Within the complex, the hexameric regulatory complex resides at the center, with the two heterodimeric catalytic subcomplexes bound on opposite sides.

It localises to the cytoplasm. The protein localises to the cytosol. Its activity is regulated as follows. Activated by the chemical integrated stress response (ISR) inhibitor ISRIB which stimulates guanine nucleotide exchange factor activity for both phosphorylated and unphosphorylated eIF2. Acts as a component of the translation initiation factor 2B (eIF2B) complex, which catalyzes the exchange of GDP for GTP on eukaryotic initiation factor 2 (eIF2) gamma subunit. Its guanine nucleotide exchange factor activity is repressed when bound to eIF2 complex phosphorylated on the alpha subunit, thereby limiting the amount of methionyl-initiator methionine tRNA available to the ribosome and consequently global translation is repressed. In Bos taurus (Bovine), this protein is Translation initiation factor eIF2B subunit beta (EIF2B2).